A 353-amino-acid chain; its full sequence is Nicotinate-nucleotide--dimethylbenzimidazole phosphoribosyltransferase (353 aa).

Residue E319 is the Proton acceptor of the active site.

It belongs to the CobT family.

The catalysed reaction is 5,6-dimethylbenzimidazole + nicotinate beta-D-ribonucleotide = alpha-ribazole 5'-phosphate + nicotinate + H(+). It functions in the pathway nucleoside biosynthesis; alpha-ribazole biosynthesis; alpha-ribazole from 5,6-dimethylbenzimidazole: step 1/2. Functionally, catalyzes the synthesis of alpha-ribazole-5'-phosphate from nicotinate mononucleotide (NAMN) and 5,6-dimethylbenzimidazole (DMB). This chain is Nicotinate-nucleotide--dimethylbenzimidazole phosphoribosyltransferase, found in Prosthecochloris aestuarii (strain DSM 271 / SK 413).